The sequence spans 188 residues: FMN-dependent NADPH-azoreductase (188 aa).

This sequence belongs to the azoreductase type 2 family. As to quaternary structure, homotetramer. Requires FMN as cofactor.

Functionally, catalyzes the reductive cleavage of azo bond in aromatic azo compounds to the corresponding amines. Requires NADPH, but not NADH, as an electron donor for its activity. The protein is FMN-dependent NADPH-azoreductase (azo1) of Staphylococcus saprophyticus subsp. saprophyticus (strain ATCC 15305 / DSM 20229 / NCIMB 8711 / NCTC 7292 / S-41).